Here is a 942-residue protein sequence, read N- to C-terminus: Mitogen-activated protein kinase kinase kinase 14 (942 aa).

Positions G136–K152 are enriched in basic residues. Disordered regions lie at residues G136–Q156 and V291–S326. The Protein kinase domain occupies M402–L657. Positions T403–K655 are interaction with ZFP91. ATP contacts are provided by residues V408–V416 and K431. Residue D517 is the Proton acceptor of the active site. At T561 the chain carries Phosphothreonine. 2 disordered regions span residues V660–R756 and S801–V823. The segment covering E707–S720 has biased composition (pro residues). Residues S809–V823 show a composition bias toward polar residues.

It belongs to the protein kinase superfamily. STE Ser/Thr protein kinase family. MAP kinase kinase kinase subfamily. In terms of assembly, interacts with TRAF2, TRAF3, TRAF5, TRAF6, IKKA and NF-kappa-B2/P100. Interacts with PELI3. Interacts with NIBP; the interaction is direct. Interacts with ARRB1 and ARRB2. Interacts with GRB10. Interacts with ZFP91. Interacts with NLRP12; this interaction promotes proteasomal degradation of MAP3K14. Directly interacts with DDX3X. Interacts (via C-terminus and kinase domain) with PPPC3A (via N-terminus) and PPP3CB. Phosphorylation at Thr-561 is required to activate its kinase activity and 'Lys-63'-linked polyubiquitination. Phosphorylated by CHUK/IKKA leading to MAP3K14 destabilization. Autophosphorylated. In terms of processing, ubiquitinated. Undergoes both 'Lys-48'- and 'Lys-63'-linked polyubiquitination. 'Lys-48'-linked polyubiquitination leads to its degradation by the proteasome, while 'Lys-63'-linked polyubiquitination stabilizes and activates it.

It localises to the cytoplasm. It catalyses the reaction L-seryl-[protein] + ATP = O-phospho-L-seryl-[protein] + ADP + H(+). The enzyme catalyses L-threonyl-[protein] + ATP = O-phospho-L-threonyl-[protein] + ADP + H(+). Its function is as follows. Lymphotoxin beta-activated kinase which seems to be exclusively involved in the activation of NF-kappa-B and its transcriptional activity. Phosphorylates CHUK/IKKA. Promotes proteolytic processing of NFKB2/P100, which leads to activation of NF-kappa-B via the non-canonical pathway. Has an essential role in the non-canonical NF-kappa-B signalining that regulates genes encoding molecules involved in B-cell survival, lymphoid organogenesis, and immune response. Could act in a receptor-selective manner. In Mus musculus (Mouse), this protein is Mitogen-activated protein kinase kinase kinase 14.